Consider the following 199-residue polypeptide: Recombination protein RecR (199 aa).

The C4-type zinc finger occupies 58–73; that stretch reads CSVCSNLTDIDPCPLC. The Toprim domain maps to 81–176; sequence TVICVVQDPR…KATRIAHGIP (96 aa).

It belongs to the RecR family.

In terms of biological role, may play a role in DNA repair. It seems to be involved in an RecBC-independent recombinational process of DNA repair. It may act with RecF and RecO. The protein is Recombination protein RecR of Ruminiclostridium cellulolyticum (strain ATCC 35319 / DSM 5812 / JCM 6584 / H10) (Clostridium cellulolyticum).